The chain runs to 259 residues: MLKWLYRLMIELTNHSLSSKMIAIFTKSRLSALLIPSYAKIYDINQEEMEKNLKNYETLQQLFIRKLKAGTRPIDQTKNSVISPVDAIIEDIGVIRENSEIVVKGKTYSIAEMLGSDEAAKKYLNGLFIILYLSPSHYHRIHSPISGVVQKQWALGKKSYPVNRLGLKYGKRPLSKNYRMITEVAANGKHIAIVKIGAMFVNSIELTHASEHLTKGQEIAYFSFGSTVVLLFEKDSIELDERIVAPMGVKVGERIGYLK.

Catalysis depends on charge relay system; for autoendoproteolytic cleavage activity residues aspartate 86, histidine 142, and serine 226. Serine 226 acts as the Schiff-base intermediate with substrate; via pyruvic acid; for decarboxylase activity in catalysis. At serine 226 the chain carries Pyruvic acid (Ser); by autocatalysis.

Belongs to the phosphatidylserine decarboxylase family. PSD-B subfamily. Prokaryotic type I sub-subfamily. In terms of assembly, heterodimer of a large membrane-associated beta subunit and a small pyruvoyl-containing alpha subunit. Pyruvate serves as cofactor. Is synthesized initially as an inactive proenzyme. Formation of the active enzyme involves a self-maturation process in which the active site pyruvoyl group is generated from an internal serine residue via an autocatalytic post-translational modification. Two non-identical subunits are generated from the proenzyme in this reaction, and the pyruvate is formed at the N-terminus of the alpha chain, which is derived from the carboxyl end of the proenzyme. The autoendoproteolytic cleavage occurs by a canonical serine protease mechanism, in which the side chain hydroxyl group of the serine supplies its oxygen atom to form the C-terminus of the beta chain, while the remainder of the serine residue undergoes an oxidative deamination to produce ammonia and the pyruvoyl prosthetic group on the alpha chain. During this reaction, the Ser that is part of the protease active site of the proenzyme becomes the pyruvoyl prosthetic group, which constitutes an essential element of the active site of the mature decarboxylase.

Its subcellular location is the cell membrane. It catalyses the reaction a 1,2-diacyl-sn-glycero-3-phospho-L-serine + H(+) = a 1,2-diacyl-sn-glycero-3-phosphoethanolamine + CO2. The protein operates within phospholipid metabolism; phosphatidylethanolamine biosynthesis; phosphatidylethanolamine from CDP-diacylglycerol: step 2/2. Functionally, catalyzes the formation of phosphatidylethanolamine (PtdEtn) from phosphatidylserine (PtdSer). This chain is Phosphatidylserine decarboxylase proenzyme, found in Geobacillus sp. (strain WCH70).